The chain runs to 352 residues: Threonine synthase (352 aa).

Lys-59 carries the N6-(pyridoxal phosphate)lysine modification. Residues Asn-85, 185-189 (GNAGN), and Thr-314 each bind pyridoxal 5'-phosphate.

Belongs to the threonine synthase family. Pyridoxal 5'-phosphate is required as a cofactor.

The catalysed reaction is O-phospho-L-homoserine + H2O = L-threonine + phosphate. Its pathway is amino-acid biosynthesis; L-threonine biosynthesis; L-threonine from L-aspartate: step 5/5. Functionally, catalyzes the gamma-elimination of phosphate from L-phosphohomoserine and the beta-addition of water to produce L-threonine. This Bacillus subtilis (strain 168) protein is Threonine synthase (thrC).